Reading from the N-terminus, the 530-residue chain is Tyrosinase (530 aa).

An N-terminal signal peptide occupies residues 1-18; sequence MLLAALCCLLWSFRTSTG. At 19–473 the chain is on the lumenal, melanosome side; it reads HFPRACASSK…IKPYLEQASR (455 aa). Residues Asn86, Asn111, and Asn161 are each glycosylated (N-linked (GlcNAc...) asparagine). Cu cation-binding residues include His180, His202, and His211. Asn230 and Asn337 each carry an N-linked (GlcNAc...) asparagine glycan. Residues His363 and His367 each contribute to the Cu cation site. A glycan (N-linked (GlcNAc...) asparagine) is linked at Asn371. A Cu cation-binding site is contributed by His390. The chain crosses the membrane as a helical span at residues 474–494; sequence IWPWLIGAAVVGCVVTAVLGG. The Cytoplasmic portion of the chain corresponds to 495 to 530; the sequence is LTSLLCRRNRKQLHEEKQPLLMEKEDYHSLLYQTHL.

Belongs to the tyrosinase family. In terms of assembly, forms an OPN3-dependent complex with DCT in response to blue light in melanocytes. Cu(2+) is required as a cofactor. Post-translationally, glycosylated.

The protein localises to the melanosome membrane. The protein resides in the melanosome. The enzyme catalyses 2 L-dopa + O2 = 2 L-dopaquinone + 2 H2O. The catalysed reaction is L-tyrosine + O2 = L-dopaquinone + H2O. It catalyses the reaction 2 5,6-dihydroxyindole-2-carboxylate + O2 = 2 indole-5,6-quinone-2-carboxylate + 2 H2O. In terms of biological role, this is a copper-containing oxidase that functions in the formation of pigments such as melanins and other polyphenolic compounds. Catalyzes the initial and rate limiting step in the cascade of reactions leading to melanin production from tyrosine. In addition to hydroxylating tyrosine to DOPA (3,4-dihydroxyphenylalanine), also catalyzes the oxidation of DOPA to DOPA-quinone, and possibly the oxidation of DHI (5,6-dihydroxyindole) to indole-5,6 quinone. In Canis lupus familiaris (Dog), this protein is Tyrosinase (TYR).